A 343-amino-acid chain; its full sequence is MLAALLGGAGARTGTLPGALLCLMALLQLLCSAPRGSGLAHGRRLICWQALLQCQGEPDCSYAYSQYAEACAPVLAQRGGADAPGPAGAFPASAASSPRWRCPSHCISALIQLNHTRRGPALEDCDCAQDEHCRSTKRAIEPCLPRTSSVGPGAGAGSVMGCTEARRRCDRDSRCNLALSRYLAYCGKLFNGLRCTDECRAVIEDMLAVPKAALLNDCVCDGLERPICESVKENMARLCFGPDASNGPGSSGSDGGLDDYYDEEYDDEQRAGAAGGEQPLDDDDGLARPGGGAAAAGGRGDLPHGPGRRSSSSGSGGHWANRSAWTPFACLLLLLLLLLGSHL.

A signal peptide spans 1–38; that stretch reads MLAALLGGAGARTGTLPGALLCLMALLQLLCSAPRGSG. Asparagine 114 carries N-linked (GlcNAc...) asparagine glycosylation. The disordered stretch occupies residues 268–317; the sequence is EQRAGAAGGEQPLDDDDGLARPGGGAAAAGGRGDLPHGPGRRSSSSGSGG. Positions 288 to 300 are enriched in gly residues; the sequence is RPGGGAAAAGGRG. Residues 303-313 show a composition bias toward low complexity; it reads PHGPGRRSSSS. The GPI-anchor amidated serine moiety is linked to residue serine 315. Positions 316 to 343 are cleaved as a propeptide — removed in mature form; sequence GGHWANRSAWTPFACLLLLLLLLLGSHL. Asparagine 321 carries N-linked (GlcNAc...) asparagine glycosylation.

Its subcellular location is the cell membrane. In terms of biological role, specific growth arrest protein involved in growth suppression. Blocks entry to S phase. Prevents cycling of normal and transformed cells. Binds 20(S)-hydroxycholesterol (20(S)-OHC). The sequence is that of Growth arrest-specific protein 1 (Gas1) from Mus musculus (Mouse).